Consider the following 224-residue polypeptide: MIKLVAIDVDGTLTDKDRLISTRAIEFIRKAEKKGIIVSLLSGNVIPVVYALKVFIGINGPVFGENGGVMFDNDGSITKFFSNEKTNSFLDEMSKKTSMRSIFTNKWREASTGFDIDGKDVDYVKAEAEKRGLVVFYSGYSWHLMNKGEDKGFAVKILKEKYGLNYEEILVVGDSNNDMPMFELPVFKACPANATDNVKKASDFVSSYSYGEEIGEVFSHFNLL.

The active-site Nucleophile is the aspartate 8. Mg(2+) contacts are provided by aspartate 8 and aspartate 10. Substrate is bound at residue lysine 151. Positions 174 and 178 each coordinate Mg(2+).

It belongs to the archaeal SPP-like hydrolase family. Requires Mg(2+) as cofactor.

It carries out the reaction 2-phosphoglycolate + H2O = glycolate + phosphate. Its function is as follows. Catalyzes the dephosphorylation of 2-phosphoglycolate. The sequence is that of Phosphoglycolate phosphatase from Thermoplasma volcanium (strain ATCC 51530 / DSM 4299 / JCM 9571 / NBRC 15438 / GSS1).